A 120-amino-acid chain; its full sequence is UPF0344 protein lin2366 (120 aa).

The next 4 helical transmembrane spans lie at Gly3–Ile23, Met33–Val53, Ile62–Leu82, and Gly92–Leu112.

It belongs to the UPF0344 family.

Its subcellular location is the cell membrane. In Listeria innocua serovar 6a (strain ATCC BAA-680 / CLIP 11262), this protein is UPF0344 protein lin2366.